The primary structure comprises 382 residues: Alcohol dehydrogenase 1 (382 aa).

Residues C49, T51, H71, C101, C104, C107, C115, and C179 each contribute to the Zn(2+) site. Residues T51 and H71 each coordinate an alcohol. NAD(+) is bound at residue T51. NAD(+)-binding positions include 204–209 (GLGAVG), D228, R233, T275, V298, 298–300 (VGV), F325, and R375.

The protein belongs to the zinc-containing alcohol dehydrogenase family. In terms of assembly, homodimer. Zn(2+) serves as cofactor.

Its subcellular location is the cytoplasm. It carries out the reaction a primary alcohol + NAD(+) = an aldehyde + NADH + H(+). The enzyme catalyses a secondary alcohol + NAD(+) = a ketone + NADH + H(+). Functionally, this protein is responsible for the conversion of alcohols to aldehydes in plants and is important for NAD metabolism during anaerobic respiration. The polypeptide is Alcohol dehydrogenase 1 (ADH1) (Petunia hybrida (Petunia)).